Reading from the N-terminus, the 273-residue chain is 3-methyl-2-oxobutanoate hydroxymethyltransferase (273 aa).

Mg(2+) is bound by residues aspartate 49 and aspartate 88. Residues 49–50 (DS), aspartate 88, and lysine 118 contribute to the 3-methyl-2-oxobutanoate site. A Mg(2+)-binding site is contributed by glutamate 120. Glutamate 187 serves as the catalytic Proton acceptor.

Belongs to the PanB family. In terms of assembly, homodecamer; pentamer of dimers. Requires Mg(2+) as cofactor.

It is found in the cytoplasm. It catalyses the reaction 3-methyl-2-oxobutanoate + (6R)-5,10-methylene-5,6,7,8-tetrahydrofolate + H2O = 2-dehydropantoate + (6S)-5,6,7,8-tetrahydrofolate. It participates in cofactor biosynthesis; (R)-pantothenate biosynthesis; (R)-pantoate from 3-methyl-2-oxobutanoate: step 1/2. Its function is as follows. Catalyzes the reversible reaction in which hydroxymethyl group from 5,10-methylenetetrahydrofolate is transferred onto alpha-ketoisovalerate to form ketopantoate. The protein is 3-methyl-2-oxobutanoate hydroxymethyltransferase of Sinorhizobium fredii (strain NBRC 101917 / NGR234).